Consider the following 578-residue polypeptide: Proline--tRNA ligase (578 aa).

It belongs to the class-II aminoacyl-tRNA synthetase family. ProS type 1 subfamily. As to quaternary structure, homodimer.

The protein resides in the cytoplasm. It catalyses the reaction tRNA(Pro) + L-proline + ATP = L-prolyl-tRNA(Pro) + AMP + diphosphate. In terms of biological role, catalyzes the attachment of proline to tRNA(Pro) in a two-step reaction: proline is first activated by ATP to form Pro-AMP and then transferred to the acceptor end of tRNA(Pro). As ProRS can inadvertently accommodate and process non-cognate amino acids such as alanine and cysteine, to avoid such errors it has two additional distinct editing activities against alanine. One activity is designated as 'pretransfer' editing and involves the tRNA(Pro)-independent hydrolysis of activated Ala-AMP. The other activity is designated 'posttransfer' editing and involves deacylation of mischarged Ala-tRNA(Pro). The misacylated Cys-tRNA(Pro) is not edited by ProRS. The protein is Proline--tRNA ligase of Burkholderia mallei (strain ATCC 23344).